A 600-amino-acid polypeptide reads, in one-letter code: Elongation factor 4 (600 aa).

The tr-type G domain maps to 5 to 187 (KYIRNFSIIA…AIVNKLPPPK (183 aa)). Residues 17–22 (DHGKST) and 134–137 (NKLD) each bind GTP.

This sequence belongs to the TRAFAC class translation factor GTPase superfamily. Classic translation factor GTPase family. LepA subfamily.

Its subcellular location is the cell inner membrane. It catalyses the reaction GTP + H2O = GDP + phosphate + H(+). Functionally, required for accurate and efficient protein synthesis under certain stress conditions. May act as a fidelity factor of the translation reaction, by catalyzing a one-codon backward translocation of tRNAs on improperly translocated ribosomes. Back-translocation proceeds from a post-translocation (POST) complex to a pre-translocation (PRE) complex, thus giving elongation factor G a second chance to translocate the tRNAs correctly. Binds to ribosomes in a GTP-dependent manner. This chain is Elongation factor 4, found in Rickettsia africae (strain ESF-5).